The chain runs to 250 residues: 5'-nucleotidase SurE (250 aa).

4 residues coordinate a divalent metal cation: D8, D9, S39, and N95.

It belongs to the SurE nucleotidase family. A divalent metal cation is required as a cofactor.

It localises to the cytoplasm. The catalysed reaction is a ribonucleoside 5'-phosphate + H2O = a ribonucleoside + phosphate. In terms of biological role, nucleotidase that shows phosphatase activity on nucleoside 5'-monophosphates. The protein is 5'-nucleotidase SurE of Cupriavidus taiwanensis (strain DSM 17343 / BCRC 17206 / CCUG 44338 / CIP 107171 / LMG 19424 / R1) (Ralstonia taiwanensis (strain LMG 19424)).